We begin with the raw amino-acid sequence, 224 residues long: Protein GrpE (224 aa).

2 stretches are compositionally biased toward polar residues: residues 1–16 and 209–224; these read MSGDASTSAQDQNVES and ESSSDAASEQPQEGDA. 2 disordered regions span residues 1 to 35 and 203 to 224; these read MSGDASTSAQDQNVESNDVPAIPDVDAGTPIDPVV and SMGPGPESSSDAASEQPQEGDA.

This sequence belongs to the GrpE family. As to quaternary structure, homodimer.

Its subcellular location is the cytoplasm. Participates actively in the response to hyperosmotic and heat shock by preventing the aggregation of stress-denatured proteins, in association with DnaK and GrpE. It is the nucleotide exchange factor for DnaK and may function as a thermosensor. Unfolded proteins bind initially to DnaJ; upon interaction with the DnaJ-bound protein, DnaK hydrolyzes its bound ATP, resulting in the formation of a stable complex. GrpE releases ADP from DnaK; ATP binding to DnaK triggers the release of the substrate protein, thus completing the reaction cycle. Several rounds of ATP-dependent interactions between DnaJ, DnaK and GrpE are required for fully efficient folding. The chain is Protein GrpE from Synechococcus sp. (strain CC9902).